A 127-amino-acid polypeptide reads, in one-letter code: Glycine cleavage system H protein (127 aa).

One can recognise a Lipoyl-binding domain in the interval 24–105; that stretch reads TAVVGITDFA…YNEGWIVKMK (82 aa). An N6-lipoyllysine modification is found at K65.

It belongs to the GcvH family. As to quaternary structure, the glycine cleavage system is composed of four proteins: P, T, L and H. (R)-lipoate serves as cofactor.

In terms of biological role, the glycine cleavage system catalyzes the degradation of glycine. The H protein shuttles the methylamine group of glycine from the P protein to the T protein. The chain is Glycine cleavage system H protein from Chlorobaculum parvum (strain DSM 263 / NCIMB 8327) (Chlorobium vibrioforme subsp. thiosulfatophilum).